We begin with the raw amino-acid sequence, 349 residues long: Protein Wnt-7b (349 aa).

Residues 1 to 24 form the signal peptide; it reads MHRNFRKWIFYVFLCFGVIYVKLG. 5 disulfides stabilise this stretch: Cys-73-Cys-84, Cys-123-Cys-131, Cys-133-Cys-152, Cys-200-Cys-214, and Cys-202-Cys-209. 2 N-linked (GlcNAc...) asparagine glycosylation sites follow: Asn-83 and Asn-127. Ser-206 carries the O-palmitoleoyl serine; by PORCN lipid modification. Residues 238 to 266 form a disordered linker region; the sequence is VEVVRASRLRQPTFLKIKQIKSYQKPMET. 6 disulfides stabilise this stretch: Cys-278/Cys-309, Cys-294/Cys-304, Cys-308/Cys-348, Cys-324/Cys-339, Cys-326/Cys-336, and Cys-331/Cys-332. A glycan (N-linked (GlcNAc...) asparagine) is linked at Asn-295.

This sequence belongs to the Wnt family. Palmitoleoylation is required for efficient binding to frizzled receptors. Depalmitoleoylation leads to Wnt signaling pathway inhibition. As to expression, expressed in differentiating lens fiber cells.

Its subcellular location is the secreted. The protein resides in the extracellular space. It is found in the extracellular matrix. Functionally, ligand for members of the frizzled family of seven transmembrane receptors that functions in the canonical Wnt/beta-catenin signaling pathway. Required for normal fusion of the chorion and the allantois during placenta development. Required for central nervous system (CNS) angiogenesis and blood-brain barrier regulation. This is Protein Wnt-7b (WNT7B) from Gallus gallus (Chicken).